Reading from the N-terminus, the 231-residue chain is Flagellar L-ring protein (231 aa).

The signal sequence occupies residues 1 to 18; sequence MNRLMIVSLLGIATALGG. Cysteine 19 carries the N-palmitoyl cysteine lipid modification. The S-diacylglycerol cysteine moiety is linked to residue cysteine 19. A disordered region spans residues 118 to 141; sequence LSLSAEYGGSRDAKGDSQAGQSNS.

This sequence belongs to the FlgH family. The basal body constitutes a major portion of the flagellar organelle and consists of four rings (L,P,S, and M) mounted on a central rod.

It is found in the cell outer membrane. It localises to the bacterial flagellum basal body. Functionally, assembles around the rod to form the L-ring and probably protects the motor/basal body from shearing forces during rotation. The protein is Flagellar L-ring protein of Pseudomonas aeruginosa (strain UCBPP-PA14).